The chain runs to 109 residues: Cytochrome c (109 aa).

Residues Cys25, Cys28, His29, and Met88 each coordinate heme c.

It belongs to the cytochrome c family. Binds 1 heme c group covalently per subunit.

Its subcellular location is the mitochondrion intermembrane space. In terms of biological role, electron carrier protein. The oxidized form of the cytochrome c heme group can accept an electron from the heme group of the cytochrome c1 subunit of cytochrome reductase. Cytochrome c then transfers this electron to the cytochrome oxidase complex, the final protein carrier in the mitochondrial electron-transport chain. This Tetrahymena pyriformis protein is Cytochrome c.